Consider the following 504-residue polypeptide: Maturase K (504 aa).

This sequence belongs to the intron maturase 2 family. MatK subfamily.

The protein localises to the plastid. Its subcellular location is the chloroplast. Usually encoded in the trnK tRNA gene intron. Probably assists in splicing its own and other chloroplast group II introns. This Eichhornia crassipes (Water hyacinth) protein is Maturase K.